Reading from the N-terminus, the 122-residue chain is Large ribosomal subunit protein uL14 (122 aa).

The protein belongs to the universal ribosomal protein uL14 family. Part of the 50S ribosomal subunit. Forms a cluster with proteins L3 and L19. In the 70S ribosome, L14 and L19 interact and together make contacts with the 16S rRNA in bridges B5 and B8.

In terms of biological role, binds to 23S rRNA. Forms part of two intersubunit bridges in the 70S ribosome. The polypeptide is Large ribosomal subunit protein uL14 (Malacoplasma penetrans (strain HF-2) (Mycoplasma penetrans)).